The primary structure comprises 841 residues: MSDISKYTPMMQQYLKIKEDYADAIVFFRLGDFYEMFFDDAITASKVLEITLTKKEAGQTVPMCGVPHHAAKVYIQKLITKGFKIAIVEQTSEPGKGLVEREVVQLITPGMIIDDDILPKNEYNFIGSVSLSEYGYILSYADISTGDTFILNGLTKQALTDEVSNLKLKEIVLTNTSDIYLLNFFKQESILVSIYTNQEVQNTRIVRNLKEKHLKEAGSLLINYLEKESKLDLSHLMPFESVIVDQYMRLDHQVLNHLELTESLTGNINSTLIQWIDKTSTAMGSRLLRYELTHPLKDKELLEKRYDYIEAFTQFEPRNKLESILEQVYDLNRLVGRVSSNQTHARDLVQLKTTLSLIPEFKEVLDSFDNPLIDEMNDKVDVFETLFQLLDASIENEPPLTVKEGGIIKDGYDETLDEFRSIAKNGDLWLEKFENEEKERTGIKNLKVGYNRVFGYFIEVSKGNIPLIQEEFGYIRKQTLANAERYITEDLKNAENKILSSKDRADKLEYEIFNQIKETAKTYTHELQLLSQIIASVDKYISLSKVAEMYKYVRPKLNHNRIVDIENGRHPVVEQHVEFIKNHIHMKPSEIFILTGPNMSGKSTYMRMFAVITVMAQTGMFVPATSANLPIYDAIFTRIGSSDDISGGKSTFMVEMVEANDALTYATENSLILFDEIGRGTATYDGLALAQAMIEYVHTQIKAQMMFSTHYHELTKLSEKHDLITNLHVKAIEQKDHMVFLHQVELGSSDKSYGIQVAALAHLPDPVIKRAKYLLKKLEKDGKGIDHNLFMFEEKVELGQIIPHDIQDLLNHINDLDINQMTPLDALIKLKYLQSLSKEKK.

596–603 (GPNMSGKS) provides a ligand contact to ATP.

It belongs to the DNA mismatch repair MutS family.

In terms of biological role, this protein is involved in the repair of mismatches in DNA. It is possible that it carries out the mismatch recognition step. This protein has a weak ATPase activity. This Acholeplasma laidlawii (strain PG-8A) protein is DNA mismatch repair protein MutS.